Consider the following 142-residue polypeptide: Large ribosomal subunit protein uL13 (142 aa).

It belongs to the universal ribosomal protein uL13 family. As to quaternary structure, part of the 50S ribosomal subunit.

In terms of biological role, this protein is one of the early assembly proteins of the 50S ribosomal subunit, although it is not seen to bind rRNA by itself. It is important during the early stages of 50S assembly. This is Large ribosomal subunit protein uL13 from Vibrio atlanticus (strain LGP32) (Vibrio splendidus (strain Mel32)).